Reading from the N-terminus, the 328-residue chain is Homoarginine-6-hydroxylase 2-ODD-233 (328 aa).

Positions 183 to 288 (FWVCRLIGYP…VSVAFFYESN (106 aa)) constitute a Fe2OG dioxygenase domain. Residues histidine 210, aspartate 212, and histidine 268 each coordinate Fe cation. Arginine 278 contributes to the 2-oxoglutarate binding site.

Belongs to the iron/ascorbate-dependent oxidoreductase family. Fe(2+) serves as cofactor. L-ascorbate is required as a cofactor. As to expression, expressed in roots and shoots.

The protein resides in the cytoplasm. It catalyses the reaction L-homoarginine + 2-oxoglutarate + O2 = 6-hydroxy-L-homoarginine + succinate + CO2. The enzyme catalyses melatonin + 2-oxoglutarate + O2 = 2-hydroxymelatonin + succinate + CO2. Functionally, 2-oxoglutarate-dependent dioxygenase catalyzing homoarginine 6-hydroxylation thus producing 6-hydroxy-L-homoarginine. Guanidine (Gd) is in turn synthesized by the spontaneous conversion of 6-hydroxy-L-homoarginine to (S)-2-amino-6-oxohexanoate (RHEA:79843); guanidine is a nitrogen-rich compound that can serve as a defense or signaling substance. Involved in melatonin degradation. Catalyzes the hydroxylation of melatonin to produce 2-hydroxymelatonin. This chain is Homoarginine-6-hydroxylase 2-ODD-233, found in Oryza sativa subsp. japonica (Rice).